The chain runs to 150 residues: Large ribosomal subunit protein bL9 (150 aa).

Belongs to the bacterial ribosomal protein bL9 family.

Functionally, binds to the 23S rRNA. The sequence is that of Large ribosomal subunit protein bL9 from Paraburkholderia phytofirmans (strain DSM 17436 / LMG 22146 / PsJN) (Burkholderia phytofirmans).